The primary structure comprises 497 residues: PHD finger protein 10 (497 aa).

Low complexity predominate over residues 1–13 (MTAAGPGAAPSPG). The interval 1–61 (MTAAGPGAAP…SSRSCETSSQ (61 aa)) is disordered. A phosphoserine mark is found at Ser11, Ser35, and Ser49. Residues 88–184 (MLQEQVSEYL…HYKEYSQMQQ (97 aa)) are essential to induce neural progenitor proliferation. The SAY stretch occupies residues 88–294 (MLQEQVSEYL…PPLDPELPAL (207 aa)). A Glycyl lysine isopeptide (Lys-Gly) (interchain with G-Cter in SUMO2) cross-link involves residue Lys240. At Ser269 the chain carries Phosphoserine. Residues 284 to 295 (EPPLDPELPALD) are compositionally biased toward low complexity. Residues 284 to 368 (EPPLDPELPA…RSVLSKSAPG (85 aa)) are disordered. Residues 291-333 (LPALDSDGDSDDGEDGGGDEKRKNKGTSDSSSGNVSEGDSPPD) are essential to induce neural progenitor proliferation. Ser296, Ser300, Ser326, and Ser330 each carry phosphoserine. Residues 296–307 (SDGDSDDGEDGG) show a composition bias toward acidic residues. A compositionally biased stretch (polar residues) spans 317–327 (TSDSSSGNVSE). Basic and acidic residues predominate over residues 337 to 358 (DTFHGRQKSKDKMATPRKDGSK). The segment at 378–435 (LCGICLKGKESNKKGKAESLIHCSQCDNSGHPSCLDMTMELVSMIKTYPWQCMECKTC) adopts a PHD-type 1; degenerate zinc-finger fold. Residue Lys384 forms a Glycyl lysine isopeptide (Lys-Gly) (interchain with G-Cter in SUMO2) linkage. The segment at 437-480 (ICGQPHHEEEMMFCDVCDRGYHTFCVGLGAIPSGRWICDCCQRA) adopts a PHD-type 2; degenerate zinc-finger fold.

It belongs to the SAYP family. As to quaternary structure, component of neural progenitors-specific chromatin remodeling complex (npBAF complex) composed of at least, ARID1A/BAF250A or ARID1B/BAF250B, SMARCD1/BAF60A, SMARCD3/BAF60C, SMARCA2/BRM/BAF190B, SMARCA4/BRG1/BAF190A, SMARCB1/BAF47, SMARCC1/BAF155, SMARCE1/BAF57, SMARCC2/BAF170, PHF10/BAF45A, ACTL6A/BAF53A and actin. Interacts with ACTL6A/BAF53A, SMARCA2/BRM/BAF190B, SMARCA4/BRG1/BAF190A and PBRM1/BAF180. In terms of tissue distribution, widely expressed. Expressed selectively in neural stem and progenitor cells (at protein level).

It is found in the nucleus. Its function is as follows. Involved in transcription activity regulation by chromatin remodeling. Belongs to the neural progenitors-specific chromatin remodeling complex (npBAF complex) and is required for the proliferation of neural progenitors. During neural development a switch from a stem/progenitor to a post-mitotic chromatin remodeling mechanism occurs as neurons exit the cell cycle and become committed to their adult state. The transition from proliferating neural stem/progenitor cells to post-mitotic neurons requires a switch in subunit composition of the npBAF and nBAF complexes. As neural progenitors exit mitosis and differentiate into neurons, npBAF complexes which contain ACTL6A/BAF53A and PHF10/BAF45A, are exchanged for homologous alternative ACTL6B/BAF53B and DPF1/BAF45B or DPF3/BAF45C subunits in neuron-specific complexes (nBAF). The npBAF complex is essential for the self-renewal/proliferative capacity of the multipotent neural stem cells. The nBAF complex along with CREST plays a role regulating the activity of genes essential for dendrite growth. This Mus musculus (Mouse) protein is PHD finger protein 10 (Phf10).